The sequence spans 250 residues: Pyrroloquinoline-quinone synthase (250 aa).

It belongs to the PqqC family.

The catalysed reaction is 6-(2-amino-2-carboxyethyl)-7,8-dioxo-1,2,3,4,7,8-hexahydroquinoline-2,4-dicarboxylate + 3 O2 = pyrroloquinoline quinone + 2 H2O2 + 2 H2O + H(+). It participates in cofactor biosynthesis; pyrroloquinoline quinone biosynthesis. Its function is as follows. Ring cyclization and eight-electron oxidation of 3a-(2-amino-2-carboxyethyl)-4,5-dioxo-4,5,6,7,8,9-hexahydroquinoline-7,9-dicarboxylic-acid to PQQ. This Xanthomonas campestris pv. campestris (strain B100) protein is Pyrroloquinoline-quinone synthase.